An 84-amino-acid chain; its full sequence is Small ribosomal subunit protein bS18 (84 aa).

This sequence belongs to the bacterial ribosomal protein bS18 family. In terms of assembly, part of the 30S ribosomal subunit. Forms a tight heterodimer with protein bS6.

In terms of biological role, binds as a heterodimer with protein bS6 to the central domain of the 16S rRNA, where it helps stabilize the platform of the 30S subunit. The sequence is that of Small ribosomal subunit protein bS18 from Mycobacterium sp. (strain JLS).